The sequence spans 278 residues: Small ribosomal subunit biogenesis GTPase RsgA (278 aa).

A CP-type G domain is found at 62–218; sequence KNTLVRPKVV…ICDTPGFNVI (157 aa). Residues 112 to 115 and 162 to 170 contribute to the GTP site; these read TKND and GQSGVGKSS. Residues Cys-241, Cys-246, His-248, and Cys-254 each coordinate Zn(2+).

It belongs to the TRAFAC class YlqF/YawG GTPase family. RsgA subfamily. As to quaternary structure, monomer. Associates with 30S ribosomal subunit, binds 16S rRNA. Requires Zn(2+) as cofactor.

It localises to the cytoplasm. In terms of biological role, one of several proteins that assist in the late maturation steps of the functional core of the 30S ribosomal subunit. Helps release RbfA from mature subunits. May play a role in the assembly of ribosomal proteins into the subunit. Circularly permuted GTPase that catalyzes slow GTP hydrolysis, GTPase activity is stimulated by the 30S ribosomal subunit. This is Small ribosomal subunit biogenesis GTPase RsgA from Mycoplasma pneumoniae (strain ATCC 29342 / M129 / Subtype 1) (Mycoplasmoides pneumoniae).